The chain runs to 90 residues: MKTAIFTVVLALAVFAVLSFGWEANEKALSEEFTELIHEKEAASEAEARECRYFWGECHDHMPCCDWLVCRYKWPITYNICVWNRTFPEK.

The first 19 residues, 1–19, serve as a signal peptide directing secretion; the sequence is MKTAIFTVVLALAVFAVLS. Positions 20–50 are excised as a propeptide; it reads FGWEANEKALSEEFTELIHEKEAASEAEARE. Disulfide bonds link C51-C65, C58-C70, and C64-C81.

It belongs to the neurotoxin 10 (Hwtx-1) family. 13 (Hntx-13) subfamily. As to expression, expressed by the venom gland.

It localises to the secreted. Functionally, ion channel inhibitor. This chain is U7-theraphotoxin-Hhn1a 6, found in Cyriopagopus hainanus (Chinese bird spider).